A 179-amino-acid polypeptide reads, in one-letter code: Large ribosomal subunit protein uL5 (179 aa).

It belongs to the universal ribosomal protein uL5 family. Part of the 50S ribosomal subunit; part of the 5S rRNA/L5/L18/L25 subcomplex. Contacts the 5S rRNA and the P site tRNA. Forms a bridge to the 30S subunit in the 70S ribosome.

Its function is as follows. This is one of the proteins that bind and probably mediate the attachment of the 5S RNA into the large ribosomal subunit, where it forms part of the central protuberance. In the 70S ribosome it contacts protein S13 of the 30S subunit (bridge B1b), connecting the 2 subunits; this bridge is implicated in subunit movement. Contacts the P site tRNA; the 5S rRNA and some of its associated proteins might help stabilize positioning of ribosome-bound tRNAs. The sequence is that of Large ribosomal subunit protein uL5 from Buchnera aphidicola subsp. Baizongia pistaciae (strain Bp).